The chain runs to 282 residues: Armadillo repeat-containing protein 1 (282 aa).

The residue at position 1 (Met-1) is an N-acetylmethionine. Residues Gly-39–Gly-81 form an ARM repeat. Residue Thr-137 is modified to Phosphothreonine. A phosphoserine mark is found at Ser-189, Ser-246, Ser-260, and Ser-267. Residues Asp-239–His-261 form a disordered region. The segment covering Ser-246–Val-255 has biased composition (basic and acidic residues).

In terms of assembly, interacts with mitochondrial contact site and cristae organizing system (MICOS) complex components IMMT/MIC60 and MICOS10/MIC10. Interacts with mitochondrial outer membrane sorting assembly machinery (SAM) complex components SAMM50 and MTX1.

The protein localises to the cytoplasm. Its subcellular location is the mitochondrion. It is found in the mitochondrion outer membrane. In terms of biological role, in association with mitochondrial contact site and cristae organizing system (MICOS) complex components and mitochondrial outer membrane sorting assembly machinery (SAM) complex components may regulate mitochondrial dynamics playing a role in determining mitochondrial length, distribution and motility. In Pongo abelii (Sumatran orangutan), this protein is Armadillo repeat-containing protein 1 (ARMC1).